Consider the following 531-residue polypeptide: MTDTIFDYVIVGGGTAGSVLANRLSARPENRVLLIEAGIDTPENNIPPEIHDGLRPWLPRLSGDKFFWPNLTIHRAAEHPGITREPQFYEQGRLLGGGSSVNMVVSNRGLPRDYDEWQALGADGWDWQGVLPYFIKTERDADYGDDPLHGNAGPIPIGRVDSRHWSDFTVAATQALEAAGLPNIHDQNARFDDGYFPPAFTLKGEERFSAARGYLDASVRVRPNLSLWTESRVLKLLTTGNAITGVSVLRGRETLQVQAREVILTAGALQSPAILLRTGIGPAADLHALGIPVLADRPGVGRNLWEHSSIGVVAPLTEQARADASTGKAGSRHQLGIRASSGVDPATPSDLFLHIGADPVSGLASAVFWVNKPSSTGWLKLKDADPFSYPDVDFNLLSDPRDLGRLKAGLRLITHYFAAPSLAKYGLALALSRFAAPQPGGPLLNDLLQDEAALERYLRTNVGGVWHASGTARIGRADDSQAVVDKAGRVYGVTGLRVADASIMPTVPTANTNLPTLMLAEKIADAILTQA.

FAD is bound by residues T15–A16, E36–A37, W68, L94, G98, N102–V105, V233, and W466. H467 (proton acceptor) is an active-site residue. FAD contacts are provided by residues A501 and T512–N513.

The protein belongs to the GMC oxidoreductase family. In terms of assembly, monomer. It depends on FAD as a cofactor.

The catalysed reaction is 5-hydroxymethylfurfural + 3 O2 + 2 H2O = 2,5-dicarboxyfuran + 3 H2O2 + 2 H(+). It carries out the reaction benzylthiol + O2 = benzothialdehyde + H2O2. Its function is as follows. Involved in the degradation and detoxification of 5-(hydroxymethyl)furfural (HMF) by mediating its oxidation to furan-2,5-dicarboxylate (FDCA), a biobased platform chemical for the production of polymers. Active with a wide range of aromatic and aliphatic primary alcohols and aldehydes: acts on alcohol groups and requires the spontaneous hydration of aldehyde groups for their oxidation. To a lesser extent, is also able to catalyze the oxidation of thiols that are structurally similar to its alcohol substrates, yielding the corresponding thiocarbonyls. The sequence is that of 5-(hydroxymethyl)furfural oxidase from Methylovorus sp. (strain MP688).